The primary structure comprises 163 residues: Leptin (163 aa).

The first 18 residues, 1 to 18, serve as a signal peptide directing secretion; the sequence is MCWRPLCRLWSYLVYVQA. Cys-113 and Cys-163 are disulfide-bonded.

This sequence belongs to the leptin family. As to expression, not exclusively localized in adipose tissue but is also expressed in liver.

The protein resides in the secreted. Key player in the regulation of energy balance and body weight control. Once released into the circulation, has central and peripheral effects by binding LEPR, found in many tissues, which results in the activation of several major signaling pathways. This is Leptin (LEP) from Gallus gallus (Chicken).